A 389-amino-acid chain; its full sequence is Phospho-N-acetylmuramoyl-pentapeptide-transferase (389 aa).

10 helical membrane passes run 25–45 (RAVA…PWVI), 73–93 (TMGG…WADL), 97–117 (FIWI…VDDY), 135–155 (FWQS…VSEA), 189–209 (SMTY…VIVG), 222–242 (GLVI…AYVM), 259–279 (AGEM…FLWF), 286–306 (VFMG…IAVI), 311–331 (IVLF…MLQV), and 366–386 (QVVV…LSTL).

This sequence belongs to the glycosyltransferase 4 family. MraY subfamily. The cofactor is Mg(2+).

It is found in the cell inner membrane. It catalyses the reaction UDP-N-acetyl-alpha-D-muramoyl-L-alanyl-gamma-D-glutamyl-meso-2,6-diaminopimeloyl-D-alanyl-D-alanine + di-trans,octa-cis-undecaprenyl phosphate = di-trans,octa-cis-undecaprenyl diphospho-N-acetyl-alpha-D-muramoyl-L-alanyl-D-glutamyl-meso-2,6-diaminopimeloyl-D-alanyl-D-alanine + UMP. It participates in cell wall biogenesis; peptidoglycan biosynthesis. Catalyzes the initial step of the lipid cycle reactions in the biosynthesis of the cell wall peptidoglycan: transfers peptidoglycan precursor phospho-MurNAc-pentapeptide from UDP-MurNAc-pentapeptide onto the lipid carrier undecaprenyl phosphate, yielding undecaprenyl-pyrophosphoryl-MurNAc-pentapeptide, known as lipid I. The polypeptide is Phospho-N-acetylmuramoyl-pentapeptide-transferase (Paraburkholderia phymatum (strain DSM 17167 / CIP 108236 / LMG 21445 / STM815) (Burkholderia phymatum)).